A 73-amino-acid chain; its full sequence is MKKSLVLKASVAVATLVPMLSFAAEGDDPAKAAFDSLQASATEYIGYAWAMVVVIVGATIGIKLFKKFTSKAS.

Positions 1-23 (MKKSLVLKASVAVATLVPMLSFA) are cleaved as a signal peptide. At 24 to 44 (AEGDDPAKAAFDSLQASATEY) the chain is on the periplasmic side. The chain crosses the membrane as a helical span at residues 45 to 65 (IGYAWAMVVVIVGATIGIKLF). The Cytoplasmic segment spans residues 66–73 (KKFTSKAS).

This sequence belongs to the inovirus capsid protein family. Homomultimerizes. There are several thousands of this protein in the phage capsid.

The protein resides in the virion. Its subcellular location is the host membrane. Functionally, self assembles to form a helical capsid wrapping up the viral genomic DNA. The capsid displays a filamentous structure with a length of 760-1950 nm and a width of 6-8 nm. The virion assembly and budding take place at the host inner membrane. The polypeptide is Capsid protein G8P (VIII) (Escherichia coli (Bacteriophage f1)).